The chain runs to 352 residues: Sperm equatorial segment protein 1 (352 aa).

Positions methionine 1 to alanine 19 are cleaved as a signal peptide. A glycan (N-linked (GlcNAc...) asparagine) is linked at asparagine 128. Residues isoleucine 140–serine 203 are disordered. The span at threonine 166 to serine 193 shows a compositional bias: polar residues.

Belongs to the SPESP1 family. Post-translationally, glycosylated. In testis there are two predominant forms of 77- and 67-kDa and a form of 47-kDa, whereas in epididymal sperm from caput, corpus, and cauda there are two forms of 47- and 43-kDa. Testis forms contain complex carbohydrate residues. Epididymal sperm forms are N-glycosylated. Then undergoes significant glycosylation in the testis and that the majority of these glycoconjugates are removed by the time sperm reach the caput epididymis.

It localises to the cytoplasmic vesicle. The protein resides in the secretory vesicle. The protein localises to the acrosome. Functionally, involved in fertilization ability of sperm. This is Sperm equatorial segment protein 1 from Macaca fascicularis (Crab-eating macaque).